The chain runs to 337 residues: Fructose-1,6-bisphosphatase class 1 (337 aa).

Residues E94, D116, L118, and D119 each contribute to the Mg(2+) site. Residues 119-122 (DGSS), N210, and K276 each bind substrate. Mg(2+) is bound at residue E282.

Belongs to the FBPase class 1 family. In terms of assembly, homotetramer. Requires Mg(2+) as cofactor.

It localises to the cytoplasm. The catalysed reaction is beta-D-fructose 1,6-bisphosphate + H2O = beta-D-fructose 6-phosphate + phosphate. It participates in carbohydrate biosynthesis; gluconeogenesis. This Burkholderia lata (strain ATCC 17760 / DSM 23089 / LMG 22485 / NCIMB 9086 / R18194 / 383) protein is Fructose-1,6-bisphosphatase class 1.